The primary structure comprises 607 residues: DNA polymerase (607 aa).

Residues Met-1–Asp-213 form the 3'-5' exonuclease domain. The interval Val-214 to Tyr-607 is polymerase.

The protein belongs to the DNA polymerase type-A family.

The enzyme catalyses DNA(n) + a 2'-deoxyribonucleoside 5'-triphosphate = DNA(n+1) + diphosphate. In terms of biological role, replicates viral genomic DNA. This polymerase possesses two enzymatic activities: DNA synthesis (polymerase) and an exonucleolytic activity that degrades single-stranded DNA in the 3'-5' direction. The chain is DNA polymerase (44) from Mycobacterium phage D29 (Mycobacteriophage D29).